The primary structure comprises 223 residues: Gastrula zinc finger protein XlCGF52.1 (223 aa).

8 consecutive C2H2-type zinc fingers follow at residues 6-27 (FTCP…TEDH), 33-55 (FTCM…QRVH), 61-83 (YTCT…ISTH), 89-111 (FPCT…QRIH), 117-139 (FQCL…QRSH), 145-167 (YACS…ERIH), 173-195 (YECN…QKIH), and 201-223 (FTCT…QKIH).

It belongs to the krueppel C2H2-type zinc-finger protein family.

The protein localises to the nucleus. May be involved in transcriptional regulation. The sequence is that of Gastrula zinc finger protein XlCGF52.1 from Xenopus laevis (African clawed frog).